Consider the following 213-residue polypeptide: Probable nicotinate-nucleotide adenylyltransferase (213 aa).

Belongs to the NadD family.

The enzyme catalyses nicotinate beta-D-ribonucleotide + ATP + H(+) = deamido-NAD(+) + diphosphate. The protein operates within cofactor biosynthesis; NAD(+) biosynthesis; deamido-NAD(+) from nicotinate D-ribonucleotide: step 1/1. Functionally, catalyzes the reversible adenylation of nicotinate mononucleotide (NaMN) to nicotinic acid adenine dinucleotide (NaAD). The protein is Probable nicotinate-nucleotide adenylyltransferase of Ruegeria pomeroyi (strain ATCC 700808 / DSM 15171 / DSS-3) (Silicibacter pomeroyi).